The chain runs to 106 residues: NADH dehydrogenase [ubiquinone] iron-sulfur protein 5 (106 aa).

The CHCH domain maps to 30 to 74; it reads PSRCHAFEKEWIECAHGIGSIRAEKECKIEFEDFRECLLRQKTMK. 2 short sequence motifs (cx9C motif) span residues 33-43 and 56-66; these read CHAFEKEWIEC and CKIEFEDFREC. 2 cysteine pairs are disulfide-bonded: Cys-33–Cys-66 and Cys-43–Cys-56. The tract at residues 84-106 is disordered; it reads EKLIKEGKYTPPPHHSGQEEPRS.

The protein belongs to the complex I NDUFS5 subunit family. In terms of assembly, mammalian complex I is composed of 45 different subunits. This is a component of the iron-sulfur (IP) fragment of the enzyme.

Its subcellular location is the mitochondrion inner membrane. The protein localises to the mitochondrion intermembrane space. Its function is as follows. Accessory subunit of the mitochondrial membrane respiratory chain NADH dehydrogenase (Complex I), that is believed not to be involved in catalysis. Complex I functions in the transfer of electrons from NADH to the respiratory chain. The immediate electron acceptor for the enzyme is believed to be ubiquinone. The protein is NADH dehydrogenase [ubiquinone] iron-sulfur protein 5 (NDUFS5) of Bos taurus (Bovine).